The following is a 518-amino-acid chain: D-aminopeptidase (518 aa).

Ser-62 functions as the Nucleophile in the catalytic mechanism. Lys-65 acts as the Proton donor/acceptor in catalysis. The tract at residues 373 to 392 is disordered; sequence FGTGPEKMDISGENEAQSSM. Residues 477–487 form an important for specificity region; the sequence is QRSMDAPSPGE. A substrate-binding site is contributed by Asp-481.

This sequence belongs to the peptidase S12 family. As to quaternary structure, homodimer.

It carries out the reaction Release of an N-terminal D-amino acid from a peptide, Xaa-|-Yaa-, in which Xaa is preferably D-Ala, D-Ser or D-Thr. D-amino acid amides and methyl esters also are hydrolyzed, as is glycine amide.. Its activity is regulated as follows. Inhibited by beta-lactam compounds such as 6-aminopenicillic acid, 7-aminocephalosporanic acid, benzylpenicillin and ampicillin. Inhibited by p-chloromercuribenzoate. Hydrolyzes N-terminal residues in D-amino acid-containing peptides. The chain is D-aminopeptidase from Brucella melitensis biotype 2 (strain ATCC 23457).